Consider the following 526-residue polypeptide: Probable feruloyl esterase B-2 (526 aa).

The signal sequence occupies residues 1-18; it reads MTKLSLLPLLTLASAVLA. Intrachain disulfides connect Cys27/Cys74 and Cys62/Cys113. An N-linked (GlcNAc...) asparagine glycan is attached at Asn52. Asn137 carries an N-linked (GlcNAc...) asparagine glycan. Cystine bridges form between Cys186-Cys441, Cys255-Cys272, Cys281-Cys291, and Cys503-Cys525. Residue Ser187 is the Acyl-ester intermediate of the active site. A glycan (N-linked (GlcNAc...) asparagine) is linked at Asn233. Asp256, Asp259, Ala261, Asp263, and Ile265 together coordinate Ca(2+). Active-site charge relay system residues include Asp400 and His440. Asn516 is a glycosylation site (N-linked (GlcNAc...) asparagine).

It belongs to the tannase family.

The protein localises to the secreted. It catalyses the reaction feruloyl-polysaccharide + H2O = ferulate + polysaccharide.. In terms of biological role, involved in degradation of plant cell walls. Hydrolyzes the feruloyl-arabinose ester bond in arabinoxylans as well as the feruloyl-galactose and feruloyl-arabinose ester bonds in pectin. In Aspergillus fumigatus (strain ATCC MYA-4609 / CBS 101355 / FGSC A1100 / Af293) (Neosartorya fumigata), this protein is Probable feruloyl esterase B-2 (faeB-2).